Here is a 775-residue protein sequence, read N- to C-terminus: Melanoma-associated antigen D1 (775 aa).

The tract at residues 37 to 330 is disordered; it reads SEAPPTSQAT…PARQTPSAWQ (294 aa). The span at 39–50 shows a compositional bias: low complexity; it reads APPTSQATAAAS. Polar residues-rich tracts occupy residues 52–63, 84–100, 107–120, 149–178, 221–235, 247–258, and 296–308; these read PNASPQSSQPPT, KAQN…SQAR, KNQS…QNGT, GQNS…NQPK, AQTS…NVES, VNNLNVEENNSG, and LAWQ…QNQT. A run of 19 repeats spans residues 292 to 297, 298 to 303, 304 to 309, 329 to 334, 335 to 340, 341 to 346, 347 to 352, 353 to 358, 359 to 364, 365 to 370, 371 to 376, 377 to 382, 383 to 388, 389 to 394, 395 to 400, 401 to 406, 407 to 412, 413 to 418, and 419 to 424. Residues 292–441 form a 22 X 6 AA tandem repeats of W-[PQ]-X-P-X-X region; the sequence is WQTPLAWQNP…IPPDWQNLRP (150 aa). Positions 309-326 are enriched in low complexity; the sequence is ARQTPPAARQSPPARQTP. The interval 374-409 is disordered; it reads TPGWQSPPSWQAPPSWQSPQDWQGPPDWQVPPDWSM. The span at 375-406 shows a compositional bias: low complexity; that stretch reads PGWQSPPSWQAPPSWQSPQDWQGPPDWQVPPD. Residues 425-429 form a 20; approximate repeat; the sequence is WIPAD. 2 tandem repeats follow at residues 430 to 435 and 436 to 441. Positions 437–452 are enriched in low complexity; the sequence is QNLRPSPNLRSSSNSR. The disordered stretch occupies residues 437-463; sequence QNLRPSPNLRSSSNSRASQNQGPPQPR. Residues 468-666 form the MAGE domain; it reads LQERANKLVK…RDWTAQFMEA (199 aa).

As to quaternary structure, interacts with DLX5, DLX7 and MSX2 and forms homomultimers. Interacts with UNC5A. Interacts with TRIM28 and PJA1. Interacts with NGFR/p75NTR and RORA. In terms of tissue distribution, ubiquitously expressed in many adult tissues, except for the spleen. Expressed in osteoblastic and chondrogenic cell lines and also during embryonic development.

The protein resides in the nucleus. Its subcellular location is the cytoplasm. It is found in the cell membrane. Functionally, involved in the apoptotic response after nerve growth factor (NGF) binding in neuronal cells. Inhibits cell cycle progression, and facilitates NGFR-mediated apoptosis. May act as a regulator of the function of DLX family members. May enhance ubiquitin ligase activity of RING-type zinc finger-containing E3 ubiquitin-protein ligases. Proposed to act through recruitment and/or stabilization of the Ubl-conjugating enzyme (E2) at the E3:substrate complex. Plays a role in the circadian rhythm regulation. May act as RORA coregulator, modulating the expression of core clock genes such as BMAL1 and NFIL3, induced, or NR1D1, repressed. The sequence is that of Melanoma-associated antigen D1 (Maged1) from Mus musculus (Mouse).